The chain runs to 142 residues: DNA-directed RNA polymerases I, II, and III subunit rpabc3 (142 aa).

The interval 16–40 is non-specific ssDNA binding; the sequence is DPDGKKFDRVSRFVCYSENYEMDLQ.

The protein belongs to the eukaryotic RPB8 RNA polymerase subunit family. As to quaternary structure, component of the RNA polymerase I (Pol I), RNA polymerase II (Pol II) and RNA polymerase III (Pol III) complexes consisting of at least 13, 12 and 17 subunits, respectively. Directly interacts with POLR2A.

It localises to the nucleus. Its subcellular location is the nucleolus. Its function is as follows. DNA-dependent RNA polymerase catalyzes the transcription of DNA into RNA using the four ribonucleoside triphosphates as substrates. Common component of RNA polymerases I, II and III which synthesize ribosomal RNA precursors, mRNA precursors and many functional non-coding RNAs, and small RNAs, such as 5S rRNA and tRNAs, respectively. The sequence is that of DNA-directed RNA polymerases I, II, and III subunit rpabc3 (polr2h) from Dictyostelium discoideum (Social amoeba).